Reading from the N-terminus, the 340-residue chain is tRNA N6-adenosine threonylcarbamoyltransferase (340 aa).

Positions 114 and 118 each coordinate Fe cation. Residues 140–144 (TISGG), Asp173, Gly186, Asp190, and Asn281 each bind substrate. Asp309 serves as a coordination point for Fe cation.

The protein belongs to the KAE1 / TsaD family. Fe(2+) is required as a cofactor.

The protein localises to the cytoplasm. It carries out the reaction L-threonylcarbamoyladenylate + adenosine(37) in tRNA = N(6)-L-threonylcarbamoyladenosine(37) in tRNA + AMP + H(+). Required for the formation of a threonylcarbamoyl group on adenosine at position 37 (t(6)A37) in tRNAs that read codons beginning with adenine. Is involved in the transfer of the threonylcarbamoyl moiety of threonylcarbamoyl-AMP (TC-AMP) to the N6 group of A37, together with TsaE and TsaB. TsaD likely plays a direct catalytic role in this reaction. The polypeptide is tRNA N6-adenosine threonylcarbamoyltransferase (Christiangramia forsetii (strain DSM 17595 / CGMCC 1.15422 / KT0803) (Gramella forsetii)).